We begin with the raw amino-acid sequence, 163 residues long: Cyclic pyranopterin monophosphate synthase (163 aa).

Substrate-binding positions include 78 to 80 (LCH) and 116 to 117 (ME). D131 is an active-site residue.

This sequence belongs to the MoaC family. As to quaternary structure, homohexamer; trimer of dimers.

It carries out the reaction (8S)-3',8-cyclo-7,8-dihydroguanosine 5'-triphosphate = cyclic pyranopterin phosphate + diphosphate. Its pathway is cofactor biosynthesis; molybdopterin biosynthesis. In terms of biological role, catalyzes the conversion of (8S)-3',8-cyclo-7,8-dihydroguanosine 5'-triphosphate to cyclic pyranopterin monophosphate (cPMP). The sequence is that of Cyclic pyranopterin monophosphate synthase from Agrobacterium fabrum (strain C58 / ATCC 33970) (Agrobacterium tumefaciens (strain C58)).